Here is a 143-residue protein sequence, read N- to C-terminus: Ribosome maturation factor RimP (143 aa).

The protein belongs to the RimP family.

The protein resides in the cytoplasm. Its function is as follows. Required for maturation of 30S ribosomal subunits. This Neisseria meningitidis serogroup C / serotype 2a (strain ATCC 700532 / DSM 15464 / FAM18) protein is Ribosome maturation factor RimP.